The following is a 98-amino-acid chain: Putative pterin-4-alpha-carbinolamine dehydratase (98 aa).

It belongs to the pterin-4-alpha-carbinolamine dehydratase family.

It carries out the reaction (4aS,6R)-4a-hydroxy-L-erythro-5,6,7,8-tetrahydrobiopterin = (6R)-L-erythro-6,7-dihydrobiopterin + H2O. The sequence is that of Putative pterin-4-alpha-carbinolamine dehydratase from Jannaschia sp. (strain CCS1).